The primary structure comprises 238 residues: Xyloglucan-specific endo-beta-1,4-glucanase A (238 aa).

A signal peptide spans 1-14 (MKLSLLSLATLASA).

It belongs to the glycosyl hydrolase 12 (cellulase H) family.

It is found in the secreted. The enzyme catalyses xyloglucan + H2O = xyloglucan oligosaccharides.. Functionally, catalyzes endohydrolysis of 1,4-beta-D-glucosidic linkages in xyloglucan with retention of the beta-configuration of the glycosyl residues. Specific for xyloglucan and does not hydrolyze other cell wall components. This chain is Xyloglucan-specific endo-beta-1,4-glucanase A (xgeA), found in Aspergillus aculeatus.